We begin with the raw amino-acid sequence, 91 residues long: MARMIQCAKLGKEAEGLDFPPLPGELGKRIYESVSKEAWQGWLKQQTMLINENRLNMADPRARQYLMKQTEKYFFGDGADQASGFVPPTEG.

Belongs to the Fe(2+)-trafficking protein family.

Could be a mediator in iron transactions between iron acquisition and iron-requiring processes, such as synthesis and/or repair of Fe-S clusters in biosynthetic enzymes. The chain is Probable Fe(2+)-trafficking protein from Burkholderia ambifaria (strain MC40-6).